The following is a 658-amino-acid chain: Protein cueball (658 aa).

Topologically, residues 1–543 are extracellular; that stretch reads MSGVTARMEN…SYCKNSFNRT (543 aa). Residues asparagine 25 and asparagine 122 are each glycosylated (N-linked (GlcNAc...) asparagine). LDL-receptor class B repeat units lie at residues 100-142, 152-195, and 196-241; these read RKLY…NHDL, RHLY…DHYS, and NRIY…NSRY. 3 consecutive EGF-like domains span residues 352-384, 387-422, and 458-495; these read EIPI…FEGE, DRSK…KRCE, and EEYT…KRCE. 8 cysteine pairs are disulfide-bonded: cysteine 356–cysteine 365, cysteine 360–cysteine 375, cysteine 391–cysteine 401, cysteine 395–cysteine 410, cysteine 412–cysteine 421, cysteine 462–cysteine 472, cysteine 466–cysteine 483, and cysteine 485–cysteine 494. N-linked (GlcNAc...) asparagine glycosylation is found at asparagine 400 and asparagine 415. Residue asparagine 476 is glycosylated (N-linked (GlcNAc...) asparagine). Asparagine 541 carries an N-linked (GlcNAc...) asparagine glycan. The helical transmembrane segment at 544-564 threads the bilayer; that stretch reads VVYASLAFAASLFILMVILLI. The Cytoplasmic segment spans residues 565-658; that stretch reads VRRFYEEGRP…SCAGGDKNLP (94 aa).

Belongs to the cueball family.

It is found in the cell membrane. In terms of biological role, has a role in spermatogenesis and oogenesis. The polypeptide is Protein cueball (Culex quinquefasciatus (Southern house mosquito)).